The primary structure comprises 93 residues: Acylphosphatase (93 aa).

In terms of domain architecture, Acylphosphatase-like spans 5–91 (RAHFLVKGFV…RGETTFRIRS (87 aa)). Residues Arg20 and Asn38 contribute to the active site.

This sequence belongs to the acylphosphatase family.

The enzyme catalyses an acyl phosphate + H2O = a carboxylate + phosphate + H(+). In Moorella thermoacetica (strain ATCC 39073 / JCM 9320), this protein is Acylphosphatase (acyP).